A 61-amino-acid chain; its full sequence is Small ribosomal subunit protein uS14B (61 aa).

Cys24, Cys27, Cys40, and Cys43 together coordinate Zn(2+).

This sequence belongs to the universal ribosomal protein uS14 family. Zinc-binding uS14 subfamily. As to quaternary structure, part of the 30S ribosomal subunit. Contacts proteins S3 and S10. The cofactor is Zn(2+).

Functionally, binds 16S rRNA, required for the assembly of 30S particles and may also be responsible for determining the conformation of the 16S rRNA at the A site. This chain is Small ribosomal subunit protein uS14B, found in Salinispora arenicola (strain CNS-205).